A 110-amino-acid chain; its full sequence is U1-lycotoxin-Ls1bb (110 aa).

The signal sequence occupies residues 1–20 (MKFVLLFGVLLVTLFSYSSA). A propeptide spanning residues 21 to 44 (EMLDDFDQADEDELLSLIEKEEAR) is cleaved from the precursor. Cystine bridges form between Cys47–Cys62, Cys54–Cys71, Cys61–Cys89, and Cys73–Cys87.

It belongs to the neurotoxin 19 (CSTX) family. 03 subfamily. As to expression, expressed by the venom gland.

It localises to the secreted. The protein is U1-lycotoxin-Ls1bb of Lycosa singoriensis (Wolf spider).